Consider the following 136-residue polypeptide: Protein NrdI (136 aa).

The protein belongs to the NrdI family.

Functionally, probably involved in ribonucleotide reductase function. This Escherichia coli (strain 55989 / EAEC) protein is Protein NrdI.